Here is a 638-residue protein sequence, read N- to C-terminus: DNA mismatch repair protein MutL (638 aa).

Positions 398 to 435 are disordered; that stretch reads GREGTSFGTQTNAFGSMATPRDNSRGSYSAGESRQRTE.

Belongs to the DNA mismatch repair MutL/HexB family.

This protein is involved in the repair of mismatches in DNA. It is required for dam-dependent methyl-directed DNA mismatch repair. May act as a 'molecular matchmaker', a protein that promotes the formation of a stable complex between two or more DNA-binding proteins in an ATP-dependent manner without itself being part of a final effector complex. The polypeptide is DNA mismatch repair protein MutL (Shewanella baltica (strain OS155 / ATCC BAA-1091)).